The sequence spans 447 residues: Ribulose bisphosphate carboxylase large chain (447 aa).

Lys-5 carries the post-translational modification N6,N6,N6-trimethyllysine. Asn-114 and Thr-164 together coordinate substrate. Lys-166 (proton acceptor) is an active-site residue. Lys-168 lines the substrate pocket. The Mg(2+) site is built by Lys-192, Asp-194, and Glu-195. N6-carboxylysine is present on Lys-192. Catalysis depends on His-285, which acts as the Proton acceptor. Residues Arg-286, His-318, and Ser-370 each contribute to the substrate site.

This sequence belongs to the RuBisCO large chain family. Type I subfamily. Heterohexadecamer of 8 large chains and 8 small chains; disulfide-linked. The disulfide link is formed within the large subunit homodimers. The cofactor is Mg(2+). In terms of processing, the disulfide bond which can form in the large chain dimeric partners within the hexadecamer appears to be associated with oxidative stress and protein turnover.

The protein resides in the plastid. Its subcellular location is the chloroplast. It carries out the reaction 2 (2R)-3-phosphoglycerate + 2 H(+) = D-ribulose 1,5-bisphosphate + CO2 + H2O. The enzyme catalyses D-ribulose 1,5-bisphosphate + O2 = 2-phosphoglycolate + (2R)-3-phosphoglycerate + 2 H(+). RuBisCO catalyzes two reactions: the carboxylation of D-ribulose 1,5-bisphosphate, the primary event in carbon dioxide fixation, as well as the oxidative fragmentation of the pentose substrate in the photorespiration process. Both reactions occur simultaneously and in competition at the same active site. The protein is Ribulose bisphosphate carboxylase large chain of Camassia leichtlinii (Western quamash).